Reading from the N-terminus, the 245-residue chain is Biosynthetic peptidoglycan transglycosylase (245 aa).

The helical transmembrane segment at 20 to 42 (VYAGSVFAGAWLATQLFYLVQIA) threads the bilayer.

This sequence belongs to the glycosyltransferase 51 family.

The protein localises to the cell inner membrane. It catalyses the reaction [GlcNAc-(1-&gt;4)-Mur2Ac(oyl-L-Ala-gamma-D-Glu-L-Lys-D-Ala-D-Ala)](n)-di-trans,octa-cis-undecaprenyl diphosphate + beta-D-GlcNAc-(1-&gt;4)-Mur2Ac(oyl-L-Ala-gamma-D-Glu-L-Lys-D-Ala-D-Ala)-di-trans,octa-cis-undecaprenyl diphosphate = [GlcNAc-(1-&gt;4)-Mur2Ac(oyl-L-Ala-gamma-D-Glu-L-Lys-D-Ala-D-Ala)](n+1)-di-trans,octa-cis-undecaprenyl diphosphate + di-trans,octa-cis-undecaprenyl diphosphate + H(+). Its pathway is cell wall biogenesis; peptidoglycan biosynthesis. Its function is as follows. Peptidoglycan polymerase that catalyzes glycan chain elongation from lipid-linked precursors. The protein is Biosynthetic peptidoglycan transglycosylase of Burkholderia ambifaria (strain MC40-6).